A 188-amino-acid polypeptide reads, in one-letter code: MFISSAYAQNTETSLEHIKNVAERIDRVFPPFDFVHFGSHLFWLAISFGLFYLFISRVIVPRIGGVIETRRDRIASDLDQAMRMKQEADIVVETYERKLAQARSQAHVIAQTASEEIKQKVELERKEIEANLEKKLTDAEKQIAKIRDKAMKSVGSIAEEVALEIVKKLIDVEVSKESVRSAVKATGY.

The chain crosses the membrane as a helical span at residues 35-55; sequence VHFGSHLFWLAISFGLFYLFI.

Belongs to the ATPase B chain family. As to quaternary structure, F-type ATPases have 2 components, F(1) - the catalytic core - and F(0) - the membrane proton channel. F(1) has five subunits: alpha(3), beta(3), gamma(1), delta(1), epsilon(1). F(0) has three main subunits: a(1), b(2) and c(10-14). The alpha and beta chains form an alternating ring which encloses part of the gamma chain. F(1) is attached to F(0) by a central stalk formed by the gamma and epsilon chains, while a peripheral stalk is formed by the delta and b chains.

Its subcellular location is the cell inner membrane. F(1)F(0) ATP synthase produces ATP from ADP in the presence of a proton or sodium gradient. F-type ATPases consist of two structural domains, F(1) containing the extramembraneous catalytic core and F(0) containing the membrane proton channel, linked together by a central stalk and a peripheral stalk. During catalysis, ATP synthesis in the catalytic domain of F(1) is coupled via a rotary mechanism of the central stalk subunits to proton translocation. Its function is as follows. Component of the F(0) channel, it forms part of the peripheral stalk, linking F(1) to F(0). The sequence is that of ATP synthase subunit b 1 from Bartonella henselae (strain ATCC 49882 / DSM 28221 / CCUG 30454 / Houston 1) (Rochalimaea henselae).